The primary structure comprises 250 residues: Protein lin-28 homolog B (250 aa).

The segment at 1–26 (MAEGGASKGGGEEPGKLPEPAEEESQ) is disordered. In terms of domain architecture, CSD spans 29–102 (RGTGHCKWFN…GLESIRVTGP (74 aa)). A phosphoserine mark is found at Ser-54, Ser-96, Ser-105, and Ser-110. Residues 98 to 126 (RVTGPGGSPCLGSERRPKGKTLQKRKPKG) are disordered. Positions 112–125 (RRPKGKTLQKRKPK) match the Bipartite nuclear localization signal motif. Residues 114–125 (PKGKTLQKRKPK) are compositionally biased toward basic residues. 2 consecutive CCHC-type zinc fingers follow at residues 127 to 144 (DRCYNCGGLDHHAKECSL) and 149 to 166 (KKCHYCQSIMHMVANCPH). 8 residues coordinate Zn(2+): Cys-129, Cys-132, His-137, Cys-142, Cys-151, Cys-154, His-159, and Cys-164. The tract at residues 169–250 (VAQPPASSQG…GPSVQKRKKT (82 aa)) is disordered. A compositionally biased stretch (polar residues) spans 173–191 (PASSQGRQEAESQPCTSTL). Ser-203 is modified (phosphoserine). Residues 210–219 (ARAEISERSG) are compositionally biased toward basic and acidic residues. Residues 220–231 (RSPQEASSTKSS) are compositionally biased toward polar residues. The short motif at 239 to 250 (KKGPSVQKRKKT) is the Nucleolar localization signal element.

The protein belongs to the lin-28 family. In terms of tissue distribution, expressed at high levels in the placenta and, at mucher lower, in testis and fetal liver. Isoform 1 is only detected in placenta and in moderately and poorly differentiated hepatocellular carcinoma cells (at protein level). Isoform 2 is detected in fetal liver, non-tumor liver tissues, as well as well-differentiated tumor tissues (at protein level). Tends to be up-regulated in triple-negative (ER-,PR-,HER2-) breast tumors, as well as in liver, ovarian, and thyroid carcinomas.

Its subcellular location is the nucleus. It is found in the nucleolus. It localises to the cytoplasm. Its function is as follows. Suppressor of microRNA (miRNA) biogenesis, including that of let-7 and possibly of miR107, miR-143 and miR-200c. Binds primary let-7 transcripts (pri-let-7), including pri-let-7g and pri-let-7a-1, and sequester them in the nucleolus, away from the microprocessor complex, hence preventing their processing into mature miRNA. Does not act on pri-miR21. The repression of let-7 expression is required for normal development and contributes to maintain the pluripotent state of embryonic stem cells by preventing let-7-mediated differentiation. When overexpressed, recruits ZCCHC11/TUT4 uridylyltransferase to pre-let-7 transcripts, leading to their terminal uridylation and degradation. This activity might not be relevant in vivo, as LIN28B-mediated inhibition of let-7 miRNA maturation appears to be ZCCHC11-independent. Interaction with target pre-miRNAs occurs via an 5'-GGAG-3' motif in the pre-miRNA terminal loop. Mediates MYC-induced let-7 repression. When overexpressed, isoform 1 stimulates growth of the breast adenocarcinoma cell line MCF-7. Isoform 2 has no effect on cell growth. The polypeptide is Protein lin-28 homolog B (LIN28B) (Homo sapiens (Human)).